Consider the following 474-residue polypeptide: 3-isopropylmalate dehydratase large subunit (474 aa).

[4Fe-4S] cluster contacts are provided by cysteine 355, cysteine 415, and cysteine 418.

It belongs to the aconitase/IPM isomerase family. LeuC type 1 subfamily. In terms of assembly, heterodimer of LeuC and LeuD. [4Fe-4S] cluster serves as cofactor.

It catalyses the reaction (2R,3S)-3-isopropylmalate = (2S)-2-isopropylmalate. The protein operates within amino-acid biosynthesis; L-leucine biosynthesis; L-leucine from 3-methyl-2-oxobutanoate: step 2/4. Its function is as follows. Catalyzes the isomerization between 2-isopropylmalate and 3-isopropylmalate, via the formation of 2-isopropylmaleate. The sequence is that of 3-isopropylmalate dehydratase large subunit from Shewanella sp. (strain W3-18-1).